The primary structure comprises 515 residues: Sugar transport protein MST4 (515 aa).

Residues 1–17 (MAGGFSVSGSGVEFEAK) lie on the Cytoplasmic side of the membrane. The chain crosses the membrane as a helical span at residues 18–38 (ITPIVIISCIMAATGGLMFGY). The Extracellular portion of the chain corresponds to 39 to 78 (DVGISGGVTSMDDFLREFFPTVLKKKHEDKESNYCKYDNQ). A helical membrane pass occupies residues 79–99 (GLQLFTSSLYLAGLTATFFAS). At 100–108 (YTTRRLGRR) the chain is on the cytoplasmic side. The chain crosses the membrane as a helical span at residues 109–129 (LTMLIAGVFFIVGVIFNGAAQ). The Extracellular segment spans residues 130–138 (NLAMLIVGR). Residues 139 to 159 (ILLGCGVGFANQAVPLFLSEI) traverse the membrane as a helical segment. The Cytoplasmic segment spans residues 160–165 (APTRIR). Residues 166–186 (GGLNILFQLNVTIGILFANLV) traverse the membrane as a helical segment. Residues 187–199 (NYGTAKIHPWGWR) lie on the Extracellular side of the membrane. The chain crosses the membrane as a helical span at residues 200–220 (LSLSLAGIPAALLTLGALFVV). The Cytoplasmic segment spans residues 221-280 (DTPNSLIERGRLEEGKAVLRKIRGTDNVEPEFNEIVEASRVAQEVKHPFRNLLQRRNRPQ). Residues 281-301 (LVIAVLLQIFQQFTGINAIMF) form a helical membrane-spanning segment. Residues 302–315 (YAPVLFNTLGFKTD) lie on the Extracellular side of the membrane. Residues 316-336 (ASLYSAVITGAVNVLSTLVSV) form a helical membrane-spanning segment. Residues 337–347 (YSVDRVGRRML) are Cytoplasmic-facing. The helical transmembrane segment at 348-368 (LLEAGVQMFLSQVAIAVVLGI) threads the bilayer. Residues 369 to 379 (KVTDRSDNLGH) lie on the Extracellular side of the membrane. The helical transmembrane segment at 380 to 400 (GWAIMVVVMVCTFVSSFAWSW) threads the bilayer. Residues 401 to 422 (GPLGWLIPSETFPLETRSAGQS) are Cytoplasmic-facing. Residues 423-443 (VTVCVNLLFTFVIAQAFLSML) form a helical membrane-spanning segment. At 444–448 (CHLKY) the chain is on the extracellular side. A helical membrane pass occupies residues 449–469 (AIFAFFSAWVVVMSLFVLFFL). Topologically, residues 470 to 515 (PETKNIPIEEMTERVWKQHWFWKRFMDDADKHHVVPNGGKSNGATV) are cytoplasmic.

It belongs to the major facilitator superfamily. Sugar transporter (TC 2.A.1.1) family. In terms of tissue distribution, expressed in roots, shoots, leaf blades, leaf sheaths, anthers, ovaries and embryos.

The protein localises to the membrane. Mediates active uptake of hexoses by sugar:proton symport. Can transport glucose, fructose, mannose and galactose. Can transport xylose and ribose. In Oryza sativa subsp. japonica (Rice), this protein is Sugar transport protein MST4.